We begin with the raw amino-acid sequence, 333 residues long: Adenosine deaminase (333 aa).

Zn(2+) contacts are provided by H12 and H14. The substrate site is built by H14, D16, and G170. H197 serves as a coordination point for Zn(2+). E200 serves as the catalytic Proton donor. D278 is a Zn(2+) binding site. Residue D279 participates in substrate binding.

It belongs to the metallo-dependent hydrolases superfamily. Adenosine and AMP deaminases family. Adenosine deaminase subfamily. Zn(2+) is required as a cofactor.

The enzyme catalyses adenosine + H2O + H(+) = inosine + NH4(+). It catalyses the reaction 2'-deoxyadenosine + H2O + H(+) = 2'-deoxyinosine + NH4(+). Catalyzes the hydrolytic deamination of adenosine and 2-deoxyadenosine. This is Adenosine deaminase from Salmonella schwarzengrund (strain CVM19633).